The chain runs to 346 residues: N-acetyl-gamma-glutamyl-phosphate reductase (346 aa).

C149 is an active-site residue.

This sequence belongs to the NAGSA dehydrogenase family. Type 1 subfamily.

The protein resides in the cytoplasm. The catalysed reaction is N-acetyl-L-glutamate 5-semialdehyde + phosphate + NADP(+) = N-acetyl-L-glutamyl 5-phosphate + NADPH + H(+). It participates in amino-acid biosynthesis; L-arginine biosynthesis; N(2)-acetyl-L-ornithine from L-glutamate: step 3/4. Catalyzes the NADPH-dependent reduction of N-acetyl-5-glutamyl phosphate to yield N-acetyl-L-glutamate 5-semialdehyde. In Citrifermentans bemidjiense (strain ATCC BAA-1014 / DSM 16622 / JCM 12645 / Bem) (Geobacter bemidjiensis), this protein is N-acetyl-gamma-glutamyl-phosphate reductase.